Here is a 494-residue protein sequence, read N- to C-terminus: Tripartite motif-containing protein 5 (494 aa).

N-acetylalanine is present on alanine 2. Residues 15-59 (CPICLELLTQPLSLDCGHSFCQACLTANHKTSMPDEGERSCPVCR) form an RING-type zinc finger. At serine 86 the chain carries Phosphoserine. A B box-type zinc finger spans residues 91–133 (QKVDHCARHGEKLLLFCQEDRKVICWLCERSQEHRGHHTFLTE). Residues cysteine 96, histidine 99, cysteine 118, and histidine 124 each coordinate Zn(2+). Positions 132-241 (TEEVAQEYQV…LISDLEHRLQ (110 aa)) form a coiled coil. The interval 186 to 199 (FEQLRHILDWVESN) is required for interaction with GABARAP and for autophagy. The region spanning 282 to 494 (LKVMLEVLRE…VPMTLCSPSS (213 aa)) is the B30.2/SPRY domain.

This sequence belongs to the TRIM/RBCC family. In terms of assembly, can form homodimers and homotrimers. In addition to lower-order dimerization, also exhibits a higher-order multimerization and both low- and high-order multimerizations are essential for its restriction activity. Interacts with BTBD1 and BTBD2. Interacts with PSMC4, PSMC5, PSMD7 and HSPA8/HSC70. Interacts (via B30.2/SPRY domain) with HSPA1A/B. Interacts with PSMC2, MAP3K7/TAK1, TAB2 and TAB3. Interacts with SQSTM1. Interacts with TRIM6 and TRIM34. Interacts with ULK1 (phosphorylated form), GABARAP, GABARAPL1, GABARAPL2, MAP1LC3A, MAP1LC3C and BECN1. Post-translationally, degraded in a proteasome-independent fashion in the absence of viral infection but in a proteasome-dependent fashion following exposure to restriction sensitive virus. Autoubiquitinated in a RING finger- and UBE2D2-dependent manner. Monoubiquitinated by TRIM21. Deubiquitinated by Yersinia YopJ. Ubiquitination may not lead to proteasomal degradation.

The protein localises to the cytoplasm. It localises to the nucleus. The catalysed reaction is S-ubiquitinyl-[E2 ubiquitin-conjugating enzyme]-L-cysteine + [acceptor protein]-L-lysine = [E2 ubiquitin-conjugating enzyme]-L-cysteine + N(6)-ubiquitinyl-[acceptor protein]-L-lysine.. It functions in the pathway protein modification; protein ubiquitination. Functionally, capsid-specific restriction factor that prevents infection from non-host-adapted retroviruses. Blocks viral replication early in the life cycle, after viral entry but before reverse transcription. In addition to acting as a capsid-specific restriction factor, also acts as a pattern recognition receptor that activates innate immune signaling in response to the retroviral capsid lattice. Binding to the viral capsid triggers its E3 ubiquitin ligase activity, and in concert with the heterodimeric ubiquitin conjugating enzyme complex UBE2V1-UBE2N (also known as UBC13-UEV1A complex) generates 'Lys-63'-linked polyubiquitin chains, which in turn are catalysts in the autophosphorylation of the MAP3K7/TAK1 complex (includes TAK1, TAB2, and TAB3). Activation of the MAP3K7/TAK1 complex by autophosphorylation results in the induction and expression of NF-kappa-B and MAPK-responsive inflammatory genes, thereby leading to an innate immune response in the infected cell. Plays a role in regulating autophagy through activation of autophagy regulator BECN1 by causing its dissociation from its inhibitors BCL2 and TAB2. In Symphalangus syndactylus (Siamang), this protein is Tripartite motif-containing protein 5 (TRIM5).